A 179-amino-acid polypeptide reads, in one-letter code: ATP synthase subunit delta (179 aa).

This sequence belongs to the ATPase delta chain family. In terms of assembly, F-type ATPases have 2 components, F(1) - the catalytic core - and F(0) - the membrane proton channel. F(1) has five subunits: alpha(3), beta(3), gamma(1), delta(1), epsilon(1). F(0) has three main subunits: a(1), b(2) and c(10-14). The alpha and beta chains form an alternating ring which encloses part of the gamma chain. F(1) is attached to F(0) by a central stalk formed by the gamma and epsilon chains, while a peripheral stalk is formed by the delta and b chains.

It is found in the cell inner membrane. Its function is as follows. F(1)F(0) ATP synthase produces ATP from ADP in the presence of a proton or sodium gradient. F-type ATPases consist of two structural domains, F(1) containing the extramembraneous catalytic core and F(0) containing the membrane proton channel, linked together by a central stalk and a peripheral stalk. During catalysis, ATP synthesis in the catalytic domain of F(1) is coupled via a rotary mechanism of the central stalk subunits to proton translocation. Functionally, this protein is part of the stalk that links CF(0) to CF(1). It either transmits conformational changes from CF(0) to CF(1) or is implicated in proton conduction. This chain is ATP synthase subunit delta, found in Burkholderia mallei (strain NCTC 10247).